The sequence spans 382 residues: Galactokinase (382 aa).

34-37 (EHTD) provides a ligand contact to substrate. Position 124-130 (124-130 (GAGLSSS)) interacts with ATP. Residues S130 and E162 each contribute to the Mg(2+) site. The Proton acceptor role is filled by D174. Residue Y223 coordinates substrate.

Belongs to the GHMP kinase family. GalK subfamily.

It localises to the cytoplasm. It catalyses the reaction alpha-D-galactose + ATP = alpha-D-galactose 1-phosphate + ADP + H(+). It participates in carbohydrate metabolism; galactose metabolism. Functionally, catalyzes the transfer of the gamma-phosphate of ATP to D-galactose to form alpha-D-galactose-1-phosphate (Gal-1-P). In Shigella boydii serotype 4 (strain Sb227), this protein is Galactokinase.